Here is a 249-residue protein sequence, read N- to C-terminus: Tetrahydromethanopterin S-methyltransferase subunit D (249 aa).

6 consecutive transmembrane segments (helical) span residues 9 to 29, 47 to 67, 75 to 95, 138 to 158, 183 to 203, and 224 to 244; these read ILWL…VHFV, GTVQ…GFMM, LILA…MIVG, VSFV…ALVY, LVGI…VIPS, and AVIS…IAIS.

Belongs to the MtrD family. As to quaternary structure, the complex is composed of 8 subunits; MtrA, MtrB, MtrC, MtrD, MtrE, MtrF, MtrG and MtrH.

The protein localises to the cell membrane. It carries out the reaction 5-methyl-5,6,7,8-tetrahydromethanopterin + coenzyme M + 2 Na(+)(in) = 5,6,7,8-tetrahydromethanopterin + methyl-coenzyme M + 2 Na(+)(out). It functions in the pathway one-carbon metabolism; methanogenesis from CO(2); methyl-coenzyme M from 5,10-methylene-5,6,7,8-tetrahydromethanopterin: step 2/2. Part of a complex that catalyzes the formation of methyl-coenzyme M and tetrahydromethanopterin from coenzyme M and methyl-tetrahydromethanopterin. This is an energy-conserving, sodium-ion translocating step. The polypeptide is Tetrahydromethanopterin S-methyltransferase subunit D (Methanosarcina acetivorans (strain ATCC 35395 / DSM 2834 / JCM 12185 / C2A)).